A 214-amino-acid polypeptide reads, in one-letter code: Imidazole glycerol phosphate synthase subunit HisH 2 (214 aa).

Residues 2–210 (KIVIIDYDMG…LDWVKIQKLG (209 aa)) form the Glutamine amidotransferase type-1 domain. The Nucleophile role is filled by Cys82. Active-site residues include His185 and Glu187.

As to quaternary structure, heterodimer of HisH and HisF.

The protein localises to the cytoplasm. The catalysed reaction is 5-[(5-phospho-1-deoxy-D-ribulos-1-ylimino)methylamino]-1-(5-phospho-beta-D-ribosyl)imidazole-4-carboxamide + L-glutamine = D-erythro-1-(imidazol-4-yl)glycerol 3-phosphate + 5-amino-1-(5-phospho-beta-D-ribosyl)imidazole-4-carboxamide + L-glutamate + H(+). It carries out the reaction L-glutamine + H2O = L-glutamate + NH4(+). It participates in amino-acid biosynthesis; L-histidine biosynthesis; L-histidine from 5-phospho-alpha-D-ribose 1-diphosphate: step 5/9. Functionally, IGPS catalyzes the conversion of PRFAR and glutamine to IGP, AICAR and glutamate. The HisH subunit provides the glutamine amidotransferase activity that produces the ammonia necessary to HisF for the synthesis of IGP and AICAR. The chain is Imidazole glycerol phosphate synthase subunit HisH 2 (hisH2) from Vibrio vulnificus (strain YJ016).